The following is a 265-amino-acid chain: Mlc titration factor A (265 aa).

Residues histidine 111, histidine 148, histidine 152, and glutamate 211 each coordinate Zn(2+).

The protein belongs to the MtfA family. In terms of assembly, interacts with Mlc. Zn(2+) is required as a cofactor.

Its subcellular location is the cytoplasm. Functionally, involved in the modulation of the activity of the glucose-phosphotransferase system (glucose-PTS). Interacts with the transcriptional repressor Mlc, preventing its interaction with DNA and leading to the modulation of expression of genes regulated by Mlc, including ptsG, which encodes the PTS system glucose-specific EIICB component. Its function is as follows. Shows zinc-dependent metallopeptidase activity. In Salmonella schwarzengrund (strain CVM19633), this protein is Mlc titration factor A.